The following is a 2036-amino-acid chain: Transmembrane channel-like protein (2036 aa).

2 disordered regions span residues 1 to 178 (MQND…IDDE) and 194 to 243 (SVRG…ESTQ). The Cytoplasmic segment spans residues 1-353 (MQNDEEPAAA…GVASYFTFLR (353 aa)). Residues 58–73 (VGSSSSNGNTSNVATG) show a composition bias toward low complexity. Residues 74 to 90 (ANSENNSGVTSPHQLSV) are compositionally biased toward polar residues. A compositionally biased stretch (basic and acidic residues) spans 125–134 (ASQEDHRSYE). Residues 166–178 (FDEDGGGGDIDDE) are compositionally biased toward acidic residues. Residues 198–208 (YRGKRGSRSSR) show a composition bias toward basic residues. Positions 216–225 (HVLDSVERRR) are enriched in basic and acidic residues. The span at 227 to 243 (SVYTTSSEEGTNQESTQ) shows a compositional bias: polar residues. Residues 354–374 (WLMWVNIMIAIPLVAFVIGPE) traverse the membrane as a helical segment. At 375–395 (YFATKHGETDPRKRMSDPEAR) the chain is on the extracellular side. A helical transmembrane segment spans residues 396-418 (VAGNLFTFWEFEGYLKYSPMFYG). At 419-432 (YYSSTSGISTSGYK) the chain is on the cytoplasmic side. The chain crosses the membrane as a helical span at residues 433 to 453 (LPLAYFLTAVLVYIYSFVATL). Residues 454 to 526 (RKMAENSRNS…NRNWRVILQR (73 aa)) lie on the Extracellular side of the membrane. The helical transmembrane segment at 527–547 (ILVNILVMGLLGLSGATVVLL) threads the bilayer. The Cytoplasmic portion of the chain corresponds to 548 to 567 (VNHSEDLAKHDNWLSRNAVN). A helical membrane pass occupies residues 568–588 (VTMTLLSFFLPMIFEALGLFE). At 589–599 (NWHPRQQLRLQ) the chain is on the extracellular side. The chain crosses the membrane as a helical span at residues 600–620 (LARIMILNMLNLYSLMFSFIY). The Cytoplasmic segment spans residues 621-1308 (KINSKEKPLQ…ILTLINNQGQ (688 aa)). Disordered stretches follow at residues 789–839 (TTAT…TEAT), 860–967 (KPLG…TDQA), 996–1027 (FFTS…NATP), 1066–1143 (LRGR…EGSE), and 1186–1205 (GSTT…KQLT). The span at 870–885 (IPNSTTNSATLSTIPA) shows a compositional bias: polar residues. Residues 886-906 (TLNTTNLPLNSTTKLTTTTST) show a composition bias toward low complexity. Polar residues predominate over residues 933–952 (TSDAPDNNSYSDITDYSSEP). Residues 953-967 (SEIEDFDEQESTDQA) are compositionally biased toward acidic residues. 3 stretches are compositionally biased toward low complexity: residues 1069-1083 (RITT…STTT), 1091-1100 (RTTTTELTST), and 1107-1130 (TTES…SSST). Residues 1309 to 1329 (VWMGIFFSPGLVLINLVKLMI) traverse the membrane as a helical segment. Over 1330–1358 (MMYFRSWIVLTCNVPHEVVFKASKSNNFY) the chain is Extracellular. A helical membrane pass occupies residues 1359-1379 (LSLLLTMLFLCVLPVGYAIVW). The Cytoplasmic portion of the chain corresponds to 1380-1423 (LRPSWHCGPFSEYNRIAEFITNTTRNALPKQLHEPLDYLTSSST). A helical transmembrane segment spans residues 1424-1444 (VIPLLLLLILIIYYLVSLTGA). Residues 1445 to 2036 (LREANQDLRT…RIDIENEHEK (592 aa)) lie on the Extracellular side of the membrane. 3 disordered regions span residues 1527–1572 (LRKG…SRLQ), 1592–1841 (ERAR…SRQG), and 1859–1990 (KKDD…IPTI). Composition is skewed to basic and acidic residues over residues 1538 to 1566 (SFVR…DKRF), 1614 to 1640 (KETH…DKKD), 1658 to 1668 (SPKDNEHDPDT), 1727 to 1743 (HIVD…EDKP), and 1777 to 1793 (PEPE…ERSS). Over residues 1806–1838 (NEPSGTEEQDRSLPSPTPSQGQGHHQRQLSVLS) the composition is skewed to polar residues. The span at 1890 to 1899 (VLSSVSSSTA) shows a compositional bias: low complexity. Pro residues predominate over residues 1903-1914 (PPTPEPESPTPS). Polar residues predominate over residues 1976–1990 (QDSQSSIWSDNIPTI).

The protein belongs to the TMC family. In terms of tissue distribution, expressed in multi-dendritic neurons of the labellum (md-L), which extend elaborate dendritic arbors innervating the bases of taste hairs (at protein level). In larvae, expressed in class I and class II dendritic arborization (da) neurons and bipolar dendrite (bd) neurons (at protein level). In adults, expressed in various sensory neurons including those in the mouth parts, olfactory neurons in the antenna, wing bristle neurons, haltere neurons, arista neurons, and many other sensory neurons, including a subset of chordotonal (Cho) neurons. Expressed in md-L axon terminals, including those that project into the subesophageal zone (SEZ). Also expressed in a small number of local neurons in the adult ventral nerve cord (VNC), and projections extending from a few neurons in the legs or wing hinges. In the adult mouth, expressed in a few multi-dendritic neurons of the ventral cibarial sensory organ (VCSO); the multiple elaborate dendritic branches form a brush-like structure that faces the luminal side of the food-passing tunnel. Also expressed in the oviduct and uterus of adult females.

It is found in the cell membrane. The protein resides in the cell projection. It localises to the dendrite. In terms of biological role, probable ion channel. Component of mechanosensitive neurons that participates in proprioception, sensing food texture, and directing egg-laying site selection (oviposition). Component of multi-dendritic neurons of the labellum (md-L) where it is required for sensing the hardness and viscosity of their food, enabling them to behaviorally discriminate their preferred softness and smoothness from harder and stickier food options. Required as part of oviposition site selection process to relay mechanosensory and chemosensory information on the hardness and sweetness of potential egg-laying substrates, thus ensuring females select the most optimal site for their eggs survival. Females determine the softest substrate for their eggs first by making a coarse evaluation of substrate hardness using mechanosensitive channels nan and Piezo in the leg tarsal bristles, followed by a much finer assessment using nan, iav and Tmc mechanosensitive channels on the labellum. This protein is required to sense subtle differences in substrate stiffness (between 0.25% and 0.3% agarose), likely acting in the md-L neurons. Also required in neurons on the labellum, including the md-Ls, and possibly in the brain, to inhibit discrimination of egg-laying substrates of different hardness if the substrate contains sucrose. During oviposition evaluation, activation of sweet neurons by sucrose enhances the activity of the Tmc neurons resulting in females losing their softness preference in favor of egg-laying sites that contain sucrose. Acts in the larvae peripheral sensory neurons, to contribute to proprioception and sensory feedback for normal forward crawling behavior. Required for the normal activity of the proprioceptive sensory dendrites, ddaE which show preferential responses to forward locomotion, and ddaD which show preferential responses to backward locomotion. This is Transmembrane channel-like protein from Drosophila melanogaster (Fruit fly).